The primary structure comprises 586 residues: Cryptochrome-1 (586 aa).

The region spanning 3 to 132 is the Photolyase/cryptochrome alpha/beta domain; that stretch reads VNAVHWFRKG…EVIVRISHTL (130 aa). K11 is covalently cross-linked (Glycyl lysine isopeptide (Lys-Gly) (interchain with G-Cter in ubiquitin)). Positions 50 to 54 match the LIR 1 motif; the sequence is NRWRF. At S71 the chain carries Phosphoserine; by AMPK. The LIR 2 signature appears at 82-87; that stretch reads DVFPRL. K107 participates in a covalent cross-link: Glycyl lysine isopeptide (Lys-Gly) (interchain with G-Cter in ubiquitin). Positions 151 to 156 match the LIR 3 motif; it reads KRFQTL. Residue K159 forms a Glycyl lysine isopeptide (Lys-Gly) (interchain with G-Cter in ubiquitin) linkage. Phosphoserine; by MAPK is present on S247. S252 lines the FAD pocket. 2 short sequence motifs (LIR) span residues 255–260 and 271–276; these read LRFGCL and DLYKKV. Phosphoserine; by AMPK is present on S280. The short motif at 285 to 290 is the LIR 6 element; the sequence is SLYGQL. Residue Q289 participates in FAD binding. K329 is covalently cross-linked (Glycyl lysine isopeptide (Lys-Gly) (interchain with G-Cter in ubiquitin)). The LIR 7 signature appears at 335–339; sequence TGFPW. Residue H355 coordinates FAD. Residues 371–470 form a required for inhibition of CLOCK-BMAL1-mediated transcription region; that stretch reads WISWEEGMKV…LIGINYPKPM (100 aa). The LIR 8 motif lies at 379 to 384; sequence KVFEEL. Residue 387–389 participates in FAD binding; sequence DAD. 3 short sequence motifs (LIR) span residues 395–400, 411–416, and 430–435; these read GSWMWL, HCYCPV, and RRYLPV. Residues 471–493 are interaction with TIMELESS; sequence VNHAEASRLNIERMKQIYQQLSR. Residue K485 forms a Glycyl lysine isopeptide (Lys-Gly) (interchain with G-Cter in ubiquitin) linkage. 2 consecutive short sequence motifs (LIR) follow at residues 486–491 and 492–497; these read QIYQQL and SRYRGL. The span at 545-559 shows a compositional bias: polar residues; that stretch reads QQTHLLKQGRSSMGT. Residues 545–586 form a disordered region; it reads QQTHLLKQGRSSMGTGLSGGKRPSQEEDTQSIGPKVQRQSTN. A Glycyl lysine isopeptide (Lys-Gly) (interchain with G-Cter in ubiquitin) cross-link involves residue K565. At S568 the chain carries Phosphoserine.

This sequence belongs to the DNA photolyase class-1 family. Component of the circadian core oscillator, which includes the CRY proteins, CLOCK or NPAS2, BMAL1 or BMAL2, CSNK1D and/or CSNK1E, TIMELESS, and the PER proteins. Interacts directly with TIMELESS. Interacts directly with PER1, PER2 and PER3; interaction with PER2 inhibits its ubiquitination and vice versa. Interacts with FBXL21. Interacts with FBXL3. Interacts with CLOCK-BMAL1 independently of PER2 and DNA. Interacts with HDAC1, HDAC2 and SIN3B. Interacts with nuclear receptors AR, NR1D1, NR3C1/GR, RORA and RORC; the interaction with at least NR3C1/GR is ligand dependent. Interacts with PRKDC. Interacts with the G protein subunit alpha GNAS; the interaction may block GPCR-mediated regulation of cAMP concentrations. Interacts with PRMT5. Interacts with EZH2. Interacts with MYBBP1A, DOCK7, HNRNPU, RPL7A, RPL8 and RPS3. Interacts with PPP5C (via TPR repeats). Interacts with MAP1LC3B. Interacts with CLOCK. Interacts with BMAL1. Interacts weakly with HDAC3; this interaction is enhanced in the presence of FBXL3. Interacts with TRIM28, KCTD5 and DDB1. Interacts with FOXO1. Interacts with DTL and DDB1-CUL4A complex. Interacts with HNF4A. Interacts with PSMD2 in a KDM8-dependent manner. Interacts with KDM8 in a FBXL3-dependent manner. Interacts with PPARG in a ligand-dependent manner. Interacts with PPARD (via domain NR LBD) and NR1I2 (via domain NR LBD) in a ligand-dependent manner. Interacts with PPARA, NR1I3 and VDR. It depends on FAD as a cofactor. (6R)-5,10-methylene-5,6,7,8-tetrahydrofolate serves as cofactor. In terms of processing, phosphorylation on Ser-247 by MAPK is important for the inhibition of CLOCK-BMAL1-mediated transcriptional activity. Phosphorylation by CSNK1E requires interaction with PER1 or PER2. Phosphorylation at Ser-71 and Ser-280 by AMPK decreases protein stability. Phosphorylation at Ser-568 exhibits a robust circadian rhythm with a peak at CT8, increases protein stability, prevents SCF(FBXL3)-mediated degradation and is antagonized by interaction with PRKDC. Ubiquitinated by the SCF(FBXL3) and SCF(FBXL21) complexes, regulating the balance between degradation and stabilization. The SCF(FBXL3) complex is mainly nuclear and mediates ubiquitination and subsequent degradation of CRY1. In contrast, cytoplasmic SCF(FBXL21) complex-mediated ubiquitination leads to stabilize CRY1 and counteract the activity of the SCF(FBXL3) complex. The SCF(FBXL3) and SCF(FBXL21) complexes probably mediate ubiquitination at different Lys residues. Ubiquitination at Lys-11 and Lys-107 are specifically ubiquitinated by the SCF(FBXL21) complex but not by the SCF(FBXL3) complex. Ubiquitination may be inhibited by PER2. Deubiquitinated by USP7. Post-translationally, undergoes autophagy-mediated degradation in the liver in a time-dependent manner. Autophagic degradation of CRY1 (an inhibitor of gluconeogenesis) occurs during periods of reduced feeding allowing induction of gluconeogenesis and maintenance of blood glucose levels.

The protein resides in the cytoplasm. It is found in the nucleus. In terms of biological role, transcriptional repressor which forms a core component of the circadian clock. The circadian clock, an internal time-keeping system, regulates various physiological processes through the generation of approximately 24 hour circadian rhythms in gene expression, which are translated into rhythms in metabolism and behavior. It is derived from the Latin roots 'circa' (about) and 'diem' (day) and acts as an important regulator of a wide array of physiological functions including metabolism, sleep, body temperature, blood pressure, endocrine, immune, cardiovascular, and renal function. Consists of two major components: the central clock, residing in the suprachiasmatic nucleus (SCN) of the brain, and the peripheral clocks that are present in nearly every tissue and organ system. Both the central and peripheral clocks can be reset by environmental cues, also known as Zeitgebers (German for 'timegivers'). The predominant Zeitgeber for the central clock is light, which is sensed by retina and signals directly to the SCN. The central clock entrains the peripheral clocks through neuronal and hormonal signals, body temperature and feeding-related cues, aligning all clocks with the external light/dark cycle. Circadian rhythms allow an organism to achieve temporal homeostasis with its environment at the molecular level by regulating gene expression to create a peak of protein expression once every 24 hours to control when a particular physiological process is most active with respect to the solar day. Transcription and translation of core clock components (CLOCK, NPAS2, BMAL1, BMAL2, PER1, PER2, PER3, CRY1 and CRY2) plays a critical role in rhythm generation, whereas delays imposed by post-translational modifications (PTMs) are important for determining the period (tau) of the rhythms (tau refers to the period of a rhythm and is the length, in time, of one complete cycle). A diurnal rhythm is synchronized with the day/night cycle, while the ultradian and infradian rhythms have a period shorter and longer than 24 hours, respectively. Disruptions in the circadian rhythms contribute to the pathology of cardiovascular diseases, cancer, metabolic syndromes and aging. A transcription/translation feedback loop (TTFL) forms the core of the molecular circadian clock mechanism. Transcription factors, CLOCK or NPAS2 and BMAL1 or BMAL2, form the positive limb of the feedback loop, act in the form of a heterodimer and activate the transcription of core clock genes and clock-controlled genes (involved in key metabolic processes), harboring E-box elements (5'-CACGTG-3') within their promoters. The core clock genes: PER1/2/3 and CRY1/2 which are transcriptional repressors form the negative limb of the feedback loop and interact with the CLOCK|NPAS2-BMAL1|BMAL2 heterodimer inhibiting its activity and thereby negatively regulating their own expression. This heterodimer also activates nuclear receptors NR1D1/2 and RORA/B/G, which form a second feedback loop and which activate and repress BMAL1 transcription, respectively. CRY1 and CRY2 have redundant functions but also differential and selective contributions at least in defining the pace of the SCN circadian clock and its circadian transcriptional outputs. More potent transcriptional repressor in cerebellum and liver than CRY2, though more effective in lengthening the period of the SCN oscillator. On its side, CRY2 seems to play a critical role in tuning SCN circadian period by opposing the action of CRY1. With CRY2, is dispensable for circadian rhythm generation but necessary for the development of intercellular networks for rhythm synchrony. Capable of translocating circadian clock core proteins such as PER proteins to the nucleus. Interacts with CLOCK-BMAL1 independently of PER proteins and is found at CLOCK-BMAL1-bound sites, suggesting that CRY may act as a molecular gatekeeper to maintainCLOCK-BMAL1 in a poised and repressed state until the proper time for transcriptional activation. Represses the CLOCK-BMAL1 induced transcription of BHLHE40/DEC1, ATF4, MTA1, KLF10 and NAMPT. May repress circadian target genes expression in collaboration with HDAC1 and HDAC2 through histone deacetylation. Mediates the clock-control activation of ATR and modulates ATR-mediated DNA damage checkpoint. In liver, mediates circadian regulation of cAMP signaling and gluconeogenesis by binding to membrane-coupled G proteins and blocking glucagon-mediated increases in intracellular cAMP concentrations and CREB1 phosphorylation. Inhibits hepatic gluconeogenesis by decreasing nuclear FOXO1 levels that down-regulates gluconeogenic gene expression. Besides its role in the maintenance of the circadian clock, is also involved in the regulation of other processes. Represses glucocorticoid receptor NR3C1/GR-induced transcriptional activity by binding to glucocorticoid response elements (GREs). Plays a key role in glucose and lipid metabolism modulation, in part, through the transcriptional regulation of genes involved in these pathways, such as LEP or ACSL4. Represses PPARD and its target genes in the skeletal muscle and limits exercise capacity. Plays an essential role in the generation of circadian rhythms in the retina. Represses the transcriptional activity of NR1I2. The sequence is that of Cryptochrome-1 (CRY1) from Macaca fascicularis (Crab-eating macaque).